Reading from the N-terminus, the 181-residue chain is Adenylate kinase (181 aa).

10 to 15 (GAGKGT) provides a ligand contact to ATP. The interval 30–59 (STGDLFRYNISNGTELGLEAKKYLDAGDLV) is NMP. AMP is bound by residues T31, R36, 57-59 (DLV), 85-88 (GYPR), and Q92. The segment at 126–132 (GRGRDDD) is LID. R127 is a binding site for ATP. Residues R129 and R140 each contribute to the AMP site. G166 provides a ligand contact to ATP.

The protein belongs to the adenylate kinase family. As to quaternary structure, monomer.

The protein resides in the cytoplasm. It carries out the reaction AMP + ATP = 2 ADP. Its pathway is purine metabolism; AMP biosynthesis via salvage pathway; AMP from ADP: step 1/1. Catalyzes the reversible transfer of the terminal phosphate group between ATP and AMP. Plays an important role in cellular energy homeostasis and in adenine nucleotide metabolism. In Mycolicibacterium vanbaalenii (strain DSM 7251 / JCM 13017 / BCRC 16820 / KCTC 9966 / NRRL B-24157 / PYR-1) (Mycobacterium vanbaalenii), this protein is Adenylate kinase.